We begin with the raw amino-acid sequence, 391 residues long: GTPase HflX (391 aa).

The segment at 162–181 (LAQQRGGAKGTRGASRGAGE) is disordered. The region spanning 222-391 (KIGAIVGYTN…KITDIIIFDK (170 aa)) is the Hflx-type G domain. GTP is bound by residues 228–235 (GYTNAGKS), 253–257 (FATLD), 278–281 (DTVG), 344–347 (NKMD), and 369–371 (SVT). The Mg(2+) site is built by Ser235 and Thr255.

This sequence belongs to the TRAFAC class OBG-HflX-like GTPase superfamily. HflX GTPase family. As to quaternary structure, monomer. Associates with the 50S ribosomal subunit. Mg(2+) is required as a cofactor.

The protein resides in the cytoplasm. In terms of biological role, GTPase that associates with the 50S ribosomal subunit and may have a role during protein synthesis or ribosome biogenesis. The chain is GTPase HflX from Treponema denticola (strain ATCC 35405 / DSM 14222 / CIP 103919 / JCM 8153 / KCTC 15104).